Here is a 161-residue protein sequence, read N- to C-terminus: Transcription initiation factor TFIID subunit 12 (161 aa).

Positions 15–55 are disordered; sequence FSSIKPEPASTPPQGSMANSTAVVKIPGTPGAGGRLSPENN. Residue lysine 19 forms a Glycyl lysine isopeptide (Lys-Gly) (interchain with G-Cter in SUMO2) linkage. Residues 26–36 are compositionally biased toward polar residues; it reads PPQGSMANSTA. Threonine 43 carries the post-translational modification Phosphothreonine. Position 51 is a phosphoserine (serine 51). Residue threonine 59 is modified to Phosphothreonine. The Histone-fold domain maps to 59–126; sequence TKKKLQDLVR…QLHLERQWNM (68 aa).

The protein belongs to the TAF12 family. In terms of assembly, component of the TFIID basal transcription factor complex, composed of TATA-box-binding protein TBP, and a number of TBP-associated factors (TAFs), including TAF1, TAF2, TAF3, TAF4, TAF5, TAF6, TAF7, TAF8, TAF9, TAF10, TAF11, TAF12 and TAF13. Component of the TATA-binding protein-free TAF complex (TFTC), the PCAF histone acetylase complex and the STAGA transcription coactivator-HAT complex. Component of the PCAF complex, at least composed of TADA2L/ADA2, TADA3L/ADA3, TAF5L/PAF65-beta, SUPT3H, TAF6L, TAF9, TAF10, TAF12 and TRRAP. Component of the STAGA transcription coactivator-HAT complex, at least composed of SUPT3H, GCN5L2, TAF5L, TAF6L, STAF65-gamma/SUPT7L, TADA3L, TAD1L, TAF10, TAF12, TRRAP and TAF9. Interacts with ATF7 (via the transactivation domain); the interaction is prevented by sumoylation of ATF7. As to quaternary structure, interacts with TBP; the interaction is direct. Interacts with TAF10; the interaction is direct. Interacts with ATF7, promoting transactivation by ATF7. Does not promote the transactivation of ATF7. As to expression, ubiquitous.

The protein resides in the nucleus. Functionally, the TFIID basal transcription factor complex plays a major role in the initiation of RNA polymerase II (Pol II)-dependent transcription. TFIID recognizes and binds promoters with or without a TATA box via its subunit TBP, a TATA-box-binding protein, and promotes assembly of the pre-initiation complex (PIC). The TFIID complex consists of TBP and TBP-associated factors (TAFs), including TAF1, TAF2, TAF3, TAF4, TAF5, TAF6, TAF7, TAF8, TAF9, TAF10, TAF11, TAF12 and TAF13. Component of the TATA-binding protein-free TAF complex (TFTC), the PCAF histone acetylase complex and the STAGA transcription coactivator-HAT complex. This is Transcription initiation factor TFIID subunit 12 from Homo sapiens (Human).